The primary structure comprises 652 residues: DNA mismatch repair protein MutL (652 aa).

Disordered regions lie at residues 357 to 377 (LGANDRQGSHSSNTPTLNYPS) and 425 to 457 (PDKGSSAQVQNTSGSDQASAQKHETTTLQNSTD). A compositionally biased stretch (polar residues) spans 365-375 (SHSSNTPTLNY).

It belongs to the DNA mismatch repair MutL/HexB family.

This protein is involved in the repair of mismatches in DNA. It is required for dam-dependent methyl-directed DNA mismatch repair. May act as a 'molecular matchmaker', a protein that promotes the formation of a stable complex between two or more DNA-binding proteins in an ATP-dependent manner without itself being part of a final effector complex. This is DNA mismatch repair protein MutL from Colwellia psychrerythraea (strain 34H / ATCC BAA-681) (Vibrio psychroerythus).